The primary structure comprises 234 residues: Glucosamine-6-phosphate deaminase (234 aa).

The Proton acceptor; for enolization step role is filled by Asp-62. Residue Asn-128 is the For ring-opening step of the active site. The active-site Proton acceptor; for ring-opening step is the His-130. The active-site For ring-opening step is the Glu-135.

Belongs to the glucosamine/galactosamine-6-phosphate isomerase family. NagB subfamily.

It carries out the reaction alpha-D-glucosamine 6-phosphate + H2O = beta-D-fructose 6-phosphate + NH4(+). It functions in the pathway amino-sugar metabolism; N-acetylneuraminate degradation; D-fructose 6-phosphate from N-acetylneuraminate: step 5/5. Functionally, catalyzes the reversible isomerization-deamination of glucosamine 6-phosphate (GlcN6P) to form fructose 6-phosphate (Fru6P) and ammonium ion. The protein is Glucosamine-6-phosphate deaminase of Streptococcus equi subsp. zooepidemicus (strain MGCS10565).